Here is a 138-residue protein sequence, read N- to C-terminus: ATP synthase epsilon chain (138 aa).

Residues Asp88–Gln119 are disordered. Positions Ser109–Gln119 are enriched in basic and acidic residues.

This sequence belongs to the ATPase epsilon chain family. In terms of assembly, F-type ATPases have 2 components, CF(1) - the catalytic core - and CF(0) - the membrane proton channel. CF(1) has five subunits: alpha(3), beta(3), gamma(1), delta(1), epsilon(1). CF(0) has three main subunits: a, b and c.

The protein localises to the cellular thylakoid membrane. Produces ATP from ADP in the presence of a proton gradient across the membrane. This is ATP synthase epsilon chain from Acaryochloris marina (strain MBIC 11017).